The following is a 158-amino-acid chain: Encapsulin nanocompartment cargo protein EncB (158 aa).

Residues Glu-22, Glu-52, and His-55 each contribute to the Fe cation site. 2 consecutive short sequence motifs (di-iron-binding motif) follow at residues 52-55 and 58-61; these read EKEH and EAVH. Residues 92 to 158 are disordered; the sequence is ATVHVPTPDG…RGGGGSGSGR (67 aa). Residues 142–149 form a probable targeting peptide region; that stretch reads LTVGSLRR. The segment covering 148 to 158 has biased composition (gly residues); the sequence is RRGGGGSGSGR.

Belongs to the ferritin-like superfamily.

The protein localises to the encapsulin nanocompartment. Functionally, cargo protein of a type 1 encapsulin nanocompartment. May help nucleate Fe atoms in the interior of the encapsulin nanocompartment. Present in about 36 copies/encapsulin nanocompartment. The protein is Encapsulin nanocompartment cargo protein EncB of Myxococcus xanthus (strain DK1622).